The following is a 399-amino-acid chain: Carbamoyl phosphate synthase small chain (399 aa).

Positions 1-204 (MTKTTLSSDP…WNKGYTINNE (204 aa)) are CPSase. L-glutamine is bound by residues Ser-60, Gly-256, and Gly-258. One can recognise a Glutamine amidotransferase type-1 domain in the interval 208-396 (HIVAIDYGIK…HDLIVNYREQ (189 aa)). Cys-285 functions as the Nucleophile in the catalytic mechanism. Leu-286, Gln-289, Asn-327, Gly-329, and Phe-330 together coordinate L-glutamine. Active-site residues include His-369 and Glu-371.

This sequence belongs to the CarA family. As to quaternary structure, composed of two chains; the small (or glutamine) chain promotes the hydrolysis of glutamine to ammonia, which is used by the large (or ammonia) chain to synthesize carbamoyl phosphate. Tetramer of heterodimers (alpha,beta)4.

The catalysed reaction is hydrogencarbonate + L-glutamine + 2 ATP + H2O = carbamoyl phosphate + L-glutamate + 2 ADP + phosphate + 2 H(+). It carries out the reaction L-glutamine + H2O = L-glutamate + NH4(+). It participates in amino-acid biosynthesis; L-arginine biosynthesis; carbamoyl phosphate from bicarbonate: step 1/1. The protein operates within pyrimidine metabolism; UMP biosynthesis via de novo pathway; (S)-dihydroorotate from bicarbonate: step 1/3. Small subunit of the glutamine-dependent carbamoyl phosphate synthetase (CPSase). CPSase catalyzes the formation of carbamoyl phosphate from the ammonia moiety of glutamine, carbonate, and phosphate donated by ATP, constituting the first step of 2 biosynthetic pathways, one leading to arginine and/or urea and the other to pyrimidine nucleotides. The small subunit (glutamine amidotransferase) binds and cleaves glutamine to supply the large subunit with the substrate ammonia. This chain is Carbamoyl phosphate synthase small chain, found in Bartonella bacilliformis (strain ATCC 35685 / KC583 / Herrer 020/F12,63).